The sequence spans 22 residues: Melittin-related peptide FQ-22-1 (22 aa).

Residue glutamine 22 is modified to Glutamine amide.

As to expression, expressed by the skin glands.

It is found in the secreted. This Rana arvalis (Moor frog) protein is Melittin-related peptide FQ-22-1.